The primary structure comprises 339 residues: MSGMPPHIPVLLKEVRSALRLGEGPGIVVDGTFGAGGYTRAILEADPGQRVIAIDRDPTAIATGRGLAAAMAGRLMLVQGRFGELDRLVRAQGIETVDGVVLDIGVSSMQLDQAQRGFSFRQDGPLDMRMESGGTSAADLVNEASEAELADIIYHYGEERRARAVARAILEARRRGRIATTATLAEIVASVVRPEPGSGIHPATRTFQALRIAVNDELGELQRALHAAERILRPGGRLAVVTFHSLEDRIVKQFFSARSGRAVSASRHLPMAEKPAPRSFTLVTKGPIGPSEAEATANPRARSAKLRAGERTDAPIPEPLTALAALAALPSRERGGGRR.

S-adenosyl-L-methionine contacts are provided by residues Gly36–Tyr38, Asp55, Phe82, Asp103, and Gln110. The interval Gly286–Pro319 is disordered.

The protein belongs to the methyltransferase superfamily. RsmH family.

It localises to the cytoplasm. The enzyme catalyses cytidine(1402) in 16S rRNA + S-adenosyl-L-methionine = N(4)-methylcytidine(1402) in 16S rRNA + S-adenosyl-L-homocysteine + H(+). Its function is as follows. Specifically methylates the N4 position of cytidine in position 1402 (C1402) of 16S rRNA. This is Ribosomal RNA small subunit methyltransferase H from Methylobacterium nodulans (strain LMG 21967 / CNCM I-2342 / ORS 2060).